The sequence spans 310 residues: UDP-N-acetylenolpyruvoylglucosamine reductase (310 aa).

Residues 35–203 (RAGGAAEALV…TRVRFALRKG (169 aa)) form the FAD-binding PCMH-type domain. The active site involves R183. The Proton donor role is filled by S232. The active site involves E302.

It belongs to the MurB family. Requires FAD as cofactor.

It is found in the cytoplasm. The catalysed reaction is UDP-N-acetyl-alpha-D-muramate + NADP(+) = UDP-N-acetyl-3-O-(1-carboxyvinyl)-alpha-D-glucosamine + NADPH + H(+). It participates in cell wall biogenesis; peptidoglycan biosynthesis. In terms of biological role, cell wall formation. In Myxococcus xanthus (strain DK1622), this protein is UDP-N-acetylenolpyruvoylglucosamine reductase.